Reading from the N-terminus, the 469-residue chain is DNA-binding transcriptional regulator NtrC (469 aa).

The Response regulatory domain maps to 5–119 (IVWVVDDDSS…EAVALVERAI (115 aa)). 4-aspartylphosphate is present on Asp54. Residues 140–369 (IIGEAPAMQD…LENTCRWLTV (230 aa)) enclose the Sigma-54 factor interaction domain. Residues 168-175 (GESGTGKE) and 231-240 (ADGGTLFLDE) each bind ATP. The H-T-H motif DNA-binding region spans 445–464 (KQEAARLLGWGRNTLTRKLK).

Post-translationally, phosphorylated and dephosphorylated by NtrB.

The protein resides in the cytoplasm. Member of the two-component regulatory system NtrB/NtrC, which controls expression of the nitrogen-regulated (ntr) genes in response to nitrogen limitation. Phosphorylated NtrC binds directly to DNA and stimulates the formation of open promoter-sigma54-RNA polymerase complexes. The sequence is that of DNA-binding transcriptional regulator NtrC (glnG) from Escherichia coli O157:H7.